The sequence spans 303 residues: MNKQNLINQFAQLITEQPNPRSVNLDQMSALEIVQLMNKEDQQVPLVIAKALPEIAVVVEKIVAAFRQGGRLVYLGAGTSGRLGVLDASECPPTFGVNHEMVKGIIAGGEQAIRYPVEGAEDNQQAAIVDLQAIQLCSKDILVGIAASGRTPYVISGLKYAKEIGSFTVAIASNPQSAMAKIADMSIETIVGPEILTGSSRLKSGTAQKLVLNMLTTASMVLLGKCYQNFMVDVQASNEKLVDRATRIIMQATGCERAKAEQTLTQADNNAKLAILMILMDLDKQSAVDLLAKNQDKLRQTLD.

The 164-residue stretch at 62–225 (IVAAFRQGGR…TTASMVLLGK (164 aa)) folds into the SIS domain. The active-site Proton donor is Glu90. The active site involves Glu121.

The protein belongs to the GCKR-like family. MurNAc-6-P etherase subfamily. Homodimer.

The catalysed reaction is N-acetyl-D-muramate 6-phosphate + H2O = N-acetyl-D-glucosamine 6-phosphate + (R)-lactate. Its pathway is amino-sugar metabolism; 1,6-anhydro-N-acetylmuramate degradation. The protein operates within amino-sugar metabolism; N-acetylmuramate degradation. It participates in cell wall biogenesis; peptidoglycan recycling. Specifically catalyzes the cleavage of the D-lactyl ether substituent of MurNAc 6-phosphate, producing GlcNAc 6-phosphate and D-lactate. Together with AnmK, is also required for the utilization of anhydro-N-acetylmuramic acid (anhMurNAc) either imported from the medium or derived from its own cell wall murein, and thus plays a role in cell wall recycling. The protein is N-acetylmuramic acid 6-phosphate etherase of Histophilus somni (strain 129Pt) (Haemophilus somnus).